Reading from the N-terminus, the 369-residue chain is Phospho-N-acetylmuramoyl-pentapeptide-transferase (369 aa).

10 consecutive transmembrane segments (helical) span residues 2–22 (IPLL…TQLF), 55–75 (AVVI…SWWI), 82–102 (PSVS…VGFL), 120–140 (AKLI…INFA), 163–183 (LAFA…NLII), 196–216 (LDGL…LIGI), 240–260 (PLDL…FLWW), 267–287 (IFMG…FAIL), 292–312 (ILLA…ILQV), and 349–369 (ILGG…WVVF).

Belongs to the glycosyltransferase 4 family. MraY subfamily. Requires Mg(2+) as cofactor.

It localises to the cell membrane. The enzyme catalyses UDP-N-acetyl-alpha-D-muramoyl-L-alanyl-gamma-D-glutamyl-meso-2,6-diaminopimeloyl-D-alanyl-D-alanine + di-trans,octa-cis-undecaprenyl phosphate = di-trans,octa-cis-undecaprenyl diphospho-N-acetyl-alpha-D-muramoyl-L-alanyl-D-glutamyl-meso-2,6-diaminopimeloyl-D-alanyl-D-alanine + UMP. Its pathway is cell wall biogenesis; peptidoglycan biosynthesis. In terms of biological role, catalyzes the initial step of the lipid cycle reactions in the biosynthesis of the cell wall peptidoglycan: transfers peptidoglycan precursor phospho-MurNAc-pentapeptide from UDP-MurNAc-pentapeptide onto the lipid carrier undecaprenyl phosphate, yielding undecaprenyl-pyrophosphoryl-MurNAc-pentapeptide, known as lipid I. This Renibacterium salmoninarum (strain ATCC 33209 / DSM 20767 / JCM 11484 / NBRC 15589 / NCIMB 2235) protein is Phospho-N-acetylmuramoyl-pentapeptide-transferase.